The chain runs to 136 residues: uncharacterized protein (136 aa).

The segment at 1–100 is disordered; the sequence is MQSREPSGWR…PCSGGPDRPE (100 aa). Residues 66-75 show a composition bias toward basic residues; that stretch reads RLLRWHHRVP.

This is an uncharacterized protein from Homo sapiens (Human).